The following is a 356-amino-acid chain: Tyrosine recombinase XerS (356 aa).

A Core-binding (CB) domain is found at 16–121 (LMPWYVLEYY…ALSSLYKYLT (106 aa)). The Tyr recombinase domain occupies 169-354 (GFLTYIDQEH…VNDEQKNALD (186 aa)). Residues Arg-210, Lys-234, His-306, Arg-309, and His-332 contribute to the active site. Catalysis depends on Tyr-341, which acts as the O-(3'-phospho-DNA)-tyrosine intermediate.

This sequence belongs to the 'phage' integrase family. XerS subfamily.

Its subcellular location is the cytoplasm. FtsK is required for recombination. Site-specific tyrosine recombinase, which acts by catalyzing the cutting and rejoining of the recombining DNA molecules. Essential to convert dimers of the bacterial chromosome into monomers to permit their segregation at cell division. This is Tyrosine recombinase XerS from Streptococcus pneumoniae serotype 19F (strain G54).